The chain runs to 356 residues: MTAQPLKAALPLLFVALSGVLGTPVISCINEDGKAVDWFAFYKLPRRTSRGGTGMGLDYLYLDSTMRTWSKSHHLINSSRSSLGRTLEQLYEAHNAKNDTAYLIYNDAVPASVNYSGNYGHAKGLLVWNRVQGFWLIHSIPKFPPVPEKGYEYPSSGRQYAQSGLCITLKYSQYETIDSQLLVFQPNIYSCFIPNIFRWELIHMPQMCAKSSASKIPSRRLTVLQSAQGLNFLHFAKSTFYTDDIFAAWIAQKLKVHLLVESWQRKNHELPSNCSLPYHVYNIKAIRGPLQSDFPSHHDHSKWCVSTKDSQARWTCIGDLNRSPHQALRSGGFICSKNRYIYQSFDRLVSHYASCN.

An N-terminal signal peptide occupies residues 1–22 (MTAQPLKAALPLLFVALSGVLG). Residues Asn-77, Asn-98, Asn-114, and Asn-273 are each glycosylated (N-linked (GlcNAc...) asparagine).

The protein belongs to the DNase II family. Liver specific.

Its subcellular location is the lysosome. It carries out the reaction Endonucleolytic cleavage to nucleoside 3'-phosphates and 3'-phosphooligonucleotide end-products.. Its function is as follows. Hydrolyzes DNA under acidic conditions. Does not require divalent cations for activity. Participates in the degradation of nuclear DNA during lens cell differentiation. The chain is Deoxyribonuclease-2-beta (Dnase2b) from Rattus norvegicus (Rat).